A 570-amino-acid polypeptide reads, in one-letter code: MIPPEIRRSVLLQKAIKLALAGTLLTFASFSATAADPSSDTETPQPPDILLGPLFNDVQNAKLFPDQKTFADAIPNSDPLMILADYRMQRNQSGFDLRHFVDVNFTLPKAGEKYVPPAGQSLREHIDGLWPVLTRSTKNVEKWDSLLPLPESYVVPGGRFREIYYWDSYFTMLGLAESGHWDKVADMVANFGYEIDAWGYIPNGNRTYYLSRSQPPFFAFMVELLVQHEGDDALKEYLPQLQKEYAYWMEGVETLQPGQQNQRVVKLEDGSVLNRYWDDRDTPRPESWVEDIATAKSNPSRPATEIYRDLRSAAASGWDFSSRWMDNPQQLSTIRTTTIVPVDLNALLYQLEKTLARASAAAGDRAKASQYDALANARQKAIEMHLWNNKEGWYADYDLQNNKIRDQLTAAALFPLYVNAAAKDRAAKVAAAAQAHLLQPGGLATTSVKSGQQWDAPNGWAPLQWVAAEGLQNYGQDDVAMEVTWRFLTNVQHTYDREKKLVEKYDVSSTGTGGGGGEYPLQDGFGWSNGVTLKMLDLICPQEKPCDSVPSTRPASLSATPTKTPSAATQ.

The signal sequence occupies residues 1 to 34 (MIPPEIRRSVLLQKAIKLALAGTLLTFASFSATA). Substrate contacts are provided by residues R159, 166 to 167 (WD), N203, 212 to 214 (RSQ), 284 to 286 (RPE), and G317. Active-site proton donor/acceptor residues include D319 and E503. E518 serves as a coordination point for substrate. Residues 544–570 (KPCDSVPSTRPASLSATPTKTPSAATQ) are disordered. A compositionally biased stretch (low complexity) spans 554–570 (PASLSATPTKTPSAATQ).

The protein belongs to the glycosyl hydrolase 37 family. Monomer.

It is found in the periplasm. It catalyses the reaction alpha,alpha-trehalose + H2O = alpha-D-glucose + beta-D-glucose. Its function is as follows. Provides the cells with the ability to utilize trehalose at high osmolarity by splitting it into glucose molecules that can subsequently be taken up by the phosphotransferase-mediated uptake system. This is Putative periplasmic trehalase from Salmonella typhi.